The chain runs to 113 residues: U11-theraphotoxin-Hhn1a (113 aa).

The N-terminal stretch at 1–21 (MNTVRVTFLLVFVLAVSLGQA) is a signal peptide. Positions 22–74 (DKDENRMEMQEKAEQGKSYLDFAENLLLQKLEELEAKLLEEDSEESRNSRQKR) are excised as a propeptide. 3 disulfide bridges follow: C75/C90, C82/C95, and C89/C110.

The protein belongs to the neurotoxin 14 (magi-1) family. 01 (HNTX-16) subfamily. Expressed by the venom gland.

The protein resides in the secreted. Probable ion channel inhibitor. This chain is U11-theraphotoxin-Hhn1a, found in Cyriopagopus hainanus (Chinese bird spider).